We begin with the raw amino-acid sequence, 85 residues long: Large ribosomal subunit protein bL27 (85 aa).

The interval 1-23 (MAHKKGQGSTQNNRDSAGRRLGV) is disordered.

Belongs to the bacterial ribosomal protein bL27 family.

The chain is Large ribosomal subunit protein bL27 from Aliarcobacter butzleri (strain RM4018) (Arcobacter butzleri).